We begin with the raw amino-acid sequence, 560 residues long: DNA ligase B (560 aa).

Lysine 124 functions as the N6-AMP-lysine intermediate in the catalytic mechanism.

Belongs to the NAD-dependent DNA ligase family. LigB subfamily.

It catalyses the reaction NAD(+) + (deoxyribonucleotide)n-3'-hydroxyl + 5'-phospho-(deoxyribonucleotide)m = (deoxyribonucleotide)n+m + AMP + beta-nicotinamide D-nucleotide.. In terms of biological role, catalyzes the formation of phosphodiester linkages between 5'-phosphoryl and 3'-hydroxyl groups in double-stranded DNA using NAD as a coenzyme and as the energy source for the reaction. The chain is DNA ligase B from Escherichia coli (strain ATCC 8739 / DSM 1576 / NBRC 3972 / NCIMB 8545 / WDCM 00012 / Crooks).